Consider the following 507-residue polypeptide: Nuclear poly(A) polymerase 3 (507 aa).

ATP contacts are provided by residues 79-81, 91-94, Asp147, Lys208, Tyr217, and 226-227; these read YGS, SDID, and GV. The Mg(2+) site is built by Asp92, Asp94, and Asp147.

This sequence belongs to the poly(A) polymerase family. As to quaternary structure, monomer. Forms a complex with cleavage and polyadenylation specificity factor (CPSF) subunits FIPS5 and CPSF30. Mg(2+) is required as a cofactor. Mn(2+) serves as cofactor. In terms of tissue distribution, expressed in leaves (mostly in petioles and tips), cotyledon, roots (tips, vascular tissue of the radicle, and throughout the root tissue excluding the elongation zone), stems, and flowers (restricted to the stigma and the pollen in mature anthers). Active in the primary and secondary root systems.

Its subcellular location is the nucleus. It catalyses the reaction RNA(n) + ATP = RNA(n)-3'-adenine ribonucleotide + diphosphate. Functionally, essential protein. Polymerase that creates the 3'-poly(A) tail of mRNA's. Also required for the endoribonucleolytic cleavage reaction at some polyadenylation sites. May acquire specificity through interaction with a cleavage and polyadenylation specificity factor (CPSF) at its C-terminus. In Arabidopsis thaliana (Mouse-ear cress), this protein is Nuclear poly(A) polymerase 3.